The sequence spans 500 residues: Na(+)/H(+) antiporter NhaB (500 aa).

The next 12 helical transmembrane spans lie at 34-54 (PLFF…EFIF), 62-82 (CYPL…GMTT), 90-110 (LVHN…IYFM), 129-149 (ALLG…LDAL), 150-170 (TVTA…HRVA), 205-225 (LLMH…VGEP), 241-261 (FFSK…VTCV), 311-331 (ILIV…LLVI), 350-370 (FKDA…VAVI), 394-414 (MLFI…VATI), 449-469 (VATP…IAPL), and 477-497 (MVWM…YAVS).

This sequence belongs to the NhaB Na(+)/H(+) (TC 2.A.34) antiporter family.

It localises to the cell inner membrane. It catalyses the reaction 2 Na(+)(in) + 3 H(+)(out) = 2 Na(+)(out) + 3 H(+)(in). Functionally, na(+)/H(+) antiporter that extrudes sodium in exchange for external protons. In Pseudomonas fluorescens (strain ATCC BAA-477 / NRRL B-23932 / Pf-5), this protein is Na(+)/H(+) antiporter NhaB.